A 136-amino-acid polypeptide reads, in one-letter code: MWLPLPLLLGLLQLQPILSYQIDWNKLERINRGKVESCGGUQLNRLKEVKGFVTEDLPLYHNLEMKHIPGADPELVLITSRYEELERIPLSDMKRDEINQLLKDLGFYRKSSPDAPVPAEFKMAPARASGDTKEDL.

Residues 1–19 form the signal peptide; that stretch reads MWLPLPLLLGLLQLQPILS. Residues C38 and U41 each act as nucleophile in the active site. The cysteinyl-selenocysteine (Cys-Sec) cross-link spans 38–41; that stretch reads CGGU. Position 41 (U41) is a non-standard amino acid, selenocysteine. Positions 111 to 136 are disordered; that stretch reads SSPDAPVPAEFKMAPARASGDTKEDL. The short motif at 133-136 is the Prevents secretion from ER element; that stretch reads KEDL.

It belongs to the selenoprotein M/F family.

The protein resides in the endoplasmic reticulum. Its function is as follows. May function as a thiol-disulfide oxidoreductase that participates in disulfide bond formation. The polypeptide is Selenoprotein M (selenom) (Xenopus laevis (African clawed frog)).